Consider the following 294-residue polypeptide: MAWIQINTTVSEALAEPLSDAFMEVNAASVTFADAKDQPIFEPEIGTTPIWSQTKVIGLFDAEADIPAVINQLATLIPDVPAERYNIEALEDKDWIRAWMDQFQPMQFGSRLWIVPSWCDTPDPKAVNLMLDPGMAFGTGTHPTTALCLTWLDQNPPTDLTVIDYGCGSGVLALAAEKLGAKHVKGTDIDPQAIIASQQNADRNNANIEFKLVKEFQSEPVDLLIANILAGPLKALAPEFIRLMKPNATLILSGLLTNQAADLIAFYQQQGFEFLAQNDLDEWSQLSFTKQVTS.

4 residues coordinate S-adenosyl-L-methionine: Thr145, Gly166, Asp188, and Asn227.

This sequence belongs to the methyltransferase superfamily. PrmA family.

It is found in the cytoplasm. It carries out the reaction L-lysyl-[protein] + 3 S-adenosyl-L-methionine = N(6),N(6),N(6)-trimethyl-L-lysyl-[protein] + 3 S-adenosyl-L-homocysteine + 3 H(+). In terms of biological role, methylates ribosomal protein L11. The polypeptide is Ribosomal protein L11 methyltransferase (Hydrogenovibrio crunogenus (strain DSM 25203 / XCL-2) (Thiomicrospira crunogena)).